A 108-amino-acid chain; its full sequence is Putative disulfide oxidoreductase YuzD (108 aa).

A disulfide bridge links cysteine 16 with cysteine 19.

This chain is Putative disulfide oxidoreductase YuzD (yuzD), found in Bacillus subtilis (strain 168).